A 197-amino-acid polypeptide reads, in one-letter code: RNA-binding protein with multiple splicing (197 aa).

Position 1 is an N-acetylmethionine (Met-1). Thr-12 carries the phosphothreonine modification. An RRM domain is found at 24–101 (RTLFVSGLPL…QTLRLEFAKA (78 aa)). The segment at 98–105 (FAKANTKM) is interaction with RNA. Thr-113 is subject to Phosphothreonine.

As to quaternary structure, homodimer; each protein chain binds one RNA molecule via the external surface of the homodimer. Interacts with RNA binding proteins MBNL1, RBFOX2, RBM4 and RBM14; the interaction allows cooperative assembly of stable cell-specific alternative splicing regulatory complexes. Also interacts with RBM47, MATR3 and ESRP2. Interacts with SMAD2, SMAD3 and SMAD4; the interactions are direct. As to expression, mRNA expressed in developing heart, with significantly higher expression in the atria relative to the ventricles.

The protein resides in the nucleus. The protein localises to the cytoplasm. It localises to the stress granule. Its subcellular location is the P-body. In terms of biological role, RNA binding protein that mediates the regulation of pre-mRNA alternative splicing (AS). Acts either as activator (FLNB, HSPG2, LIPA1, MYOCD, PTPRF and PPFIBP1) or repressor (TPM1, ACTN1, ITGA7, PIEZO1, LSM14B, MBNL1 and MBML2) of splicing events on specific pre-mRNA targets. Together with RNA binding proteins RBFOX2 and MBNL1/2, activates a splicing program associated with differentiated contractile vascular smooth muscle cells (SMC) by regulating AS of numerous pre-mRNA involved in actin cytoskeleton and focal adhesion machineries, suggesting a role in promoting a cell differentiated state. Binds to introns, exons and 3'-UTR associated with tandem CAC trinucleotide motifs separated by a variable spacer region, at a minimum as a dimer. The minimal length of RNA required for RBPMS-binding tandem CAC motifs is 15 nt, with spacing ranging from 1 to 9 nt. Can also bind to CA dinucleotide repeats. Mediates repression of TPM1 exon 3 by binding to CAC tandem repeats in the flanking intronic regions, followed by higher-order oligomerization and heterotypic interactions with other splicing regulators including MBNL1 and RBFOX2, which prevents assembly of ATP-dependent splicing complexes. The chain is RNA-binding protein with multiple splicing from Mus musculus (Mouse).